Consider the following 370-residue polypeptide: Cobalt-precorrin-5B C(1)-methyltransferase (370 aa).

It belongs to the CbiD family.

The enzyme catalyses Co-precorrin-5B + S-adenosyl-L-methionine = Co-precorrin-6A + S-adenosyl-L-homocysteine. It functions in the pathway cofactor biosynthesis; adenosylcobalamin biosynthesis; cob(II)yrinate a,c-diamide from sirohydrochlorin (anaerobic route): step 6/10. Functionally, catalyzes the methylation of C-1 in cobalt-precorrin-5B to form cobalt-precorrin-6A. The chain is Cobalt-precorrin-5B C(1)-methyltransferase from Pseudomonas syringae pv. syringae (strain B728a).